Here is a 183-residue protein sequence, read N- to C-terminus: Protein FAM180B (183 aa).

The first 23 residues, methionine 1–threonine 23, serve as a signal peptide directing secretion.

Belongs to the FAM180 family.

It is found in the secreted. This chain is Protein FAM180B (FAM180B), found in Homo sapiens (Human).